Reading from the N-terminus, the 34-residue chain is Tryptophanase operon leader peptide (34 aa).

This chain is Tryptophanase operon leader peptide (tnaL), found in Proteus vulgaris.